Reading from the N-terminus, the 320-residue chain is Malate dehydrogenase (320 aa).

NAD(+)-binding positions include 10–15 (GSGMIG) and Asp34. Positions 83 and 89 each coordinate substrate. NAD(+) is bound by residues Asn96 and 119–121 (ITN). Substrate contacts are provided by Asn121 and Arg152. His176 serves as the catalytic Proton acceptor.

Belongs to the LDH/MDH superfamily. MDH type 3 family.

It carries out the reaction (S)-malate + NAD(+) = oxaloacetate + NADH + H(+). In terms of biological role, catalyzes the reversible oxidation of malate to oxaloacetate. In Hyphomonas neptunium (strain ATCC 15444), this protein is Malate dehydrogenase.